Consider the following 338-residue polypeptide: Probable 1-aminocyclopropane-1-carboxylate deaminase (338 aa).

Lysine 51 carries the N6-(pyridoxal phosphate)lysine modification. Residue serine 78 is the Nucleophile of the active site.

It belongs to the ACC deaminase/D-cysteine desulfhydrase family. Requires pyridoxal 5'-phosphate as cofactor.

It catalyses the reaction 1-aminocyclopropane-1-carboxylate + H2O = 2-oxobutanoate + NH4(+). Functionally, catalyzes a cyclopropane ring-opening reaction, the irreversible conversion of 1-aminocyclopropane-1-carboxylate (ACC) to ammonia and alpha-ketobutyrate. The sequence is that of Probable 1-aminocyclopropane-1-carboxylate deaminase from Schizosaccharomyces pombe (strain 972 / ATCC 24843) (Fission yeast).